The chain runs to 932 residues: UPF0182 protein Amet_0022 (932 aa).

7 helical membrane passes run 14 to 34, 60 to 80, 104 to 124, 166 to 186, 208 to 228, 256 to 276, and 286 to 306; these read VIIG…SEIL, LQIG…YLIG, ILIL…AGSL, TSIL…MFLI, LLQI…LVLA, VTLW…TGVV, and LLLI…VISL.

Belongs to the UPF0182 family.

Its subcellular location is the cell membrane. This Alkaliphilus metalliredigens (strain QYMF) protein is UPF0182 protein Amet_0022.